We begin with the raw amino-acid sequence, 521 residues long: Bifunctional purine biosynthesis protein PurH (521 aa).

Residues Met-1–Val-147 enclose the MGS-like domain.

It belongs to the PurH family.

The catalysed reaction is (6R)-10-formyltetrahydrofolate + 5-amino-1-(5-phospho-beta-D-ribosyl)imidazole-4-carboxamide = 5-formamido-1-(5-phospho-D-ribosyl)imidazole-4-carboxamide + (6S)-5,6,7,8-tetrahydrofolate. The enzyme catalyses IMP + H2O = 5-formamido-1-(5-phospho-D-ribosyl)imidazole-4-carboxamide. Its pathway is purine metabolism; IMP biosynthesis via de novo pathway; 5-formamido-1-(5-phospho-D-ribosyl)imidazole-4-carboxamide from 5-amino-1-(5-phospho-D-ribosyl)imidazole-4-carboxamide (10-formyl THF route): step 1/1. It participates in purine metabolism; IMP biosynthesis via de novo pathway; IMP from 5-formamido-1-(5-phospho-D-ribosyl)imidazole-4-carboxamide: step 1/1. The protein is Bifunctional purine biosynthesis protein PurH of Geobacter metallireducens (strain ATCC 53774 / DSM 7210 / GS-15).